We begin with the raw amino-acid sequence, 237 residues long: Ribonuclease PH (237 aa).

Phosphate contacts are provided by residues R86 and 124 to 126; that span reads GTR.

The protein belongs to the RNase PH family. In terms of assembly, homohexameric ring arranged as a trimer of dimers.

The catalysed reaction is tRNA(n+1) + phosphate = tRNA(n) + a ribonucleoside 5'-diphosphate. Phosphorolytic 3'-5' exoribonuclease that plays an important role in tRNA 3'-end maturation. Removes nucleotide residues following the 3'-CCA terminus of tRNAs; can also add nucleotides to the ends of RNA molecules by using nucleoside diphosphates as substrates, but this may not be physiologically important. Probably plays a role in initiation of 16S rRNA degradation (leading to ribosome degradation) during starvation. The sequence is that of Ribonuclease PH from Tolumonas auensis (strain DSM 9187 / NBRC 110442 / TA 4).